Here is a 303-residue protein sequence, read N- to C-terminus: Beta-lactamase L2 (303 aa).

Residues 1-35 (MLARRRFLQFSGAAVASSLALPLLARAAGKTAASA) constitute a signal peptide (tat-type signal). The active-site Acyl-ester intermediate is S83. 247-249 (KTG) lines the substrate pocket.

It belongs to the class-A beta-lactamase family. In terms of processing, predicted to be exported by the Tat system. The position of the signal peptide cleavage has not been experimentally proven.

The enzyme catalyses a beta-lactam + H2O = a substituted beta-amino acid. This chain is Beta-lactamase L2, found in Stenotrophomonas maltophilia (Pseudomonas maltophilia).